We begin with the raw amino-acid sequence, 268 residues long: Holocytochrome c-type synthase (268 aa).

Low complexity predominate over residues 1 to 22; the sequence is MGLSPSAPAVAVQASNASASPP. A disordered region spans residues 1–25; the sequence is MGLSPSAPAVAVQASNASASPPSGC. G2 is lipidated: N-myristoyl glycine. 2 HRM repeats span residues 24–29 and 34–39; these read GCPMHE and GCPVNT.

Belongs to the cytochrome c-type heme lyase family.

It localises to the mitochondrion inner membrane. The protein localises to the membrane. It catalyses the reaction holo-[cytochrome c] = apo-[cytochrome c] + heme b. Its function is as follows. Lyase that catalyzes the covalent linking of the heme group to the cytochrome C apoprotein to produce the mature functional cytochrome. The protein is Holocytochrome c-type synthase of Homo sapiens (Human).